The sequence spans 119 residues: Protein phosphatase EYA1 (119 aa).

The protein belongs to the HAD-like hydrolase superfamily. EYA family. Mg(2+) serves as cofactor.

It is found in the cytoplasm. Its subcellular location is the nucleus. It carries out the reaction O-phospho-L-tyrosyl-[protein] + H2O = L-tyrosyl-[protein] + phosphate. The catalysed reaction is O-phospho-L-seryl-[protein] + H2O = L-seryl-[protein] + phosphate. It catalyses the reaction O-phospho-L-threonyl-[protein] + H2O = L-threonyl-[protein] + phosphate. In terms of biological role, functions both as protein phosphatase and as transcriptional coactivator for SIX1, and probably also for other transcription factors of this family. Tyrosine phosphatase that dephosphorylates 'Tyr-142' of histone H2AX (H2AXY142ph) and promotes efficient DNA repair via the recruitment of DNA repair complexes containing MDC1. 'Tyr-142' phosphorylation of histone H2AX plays a central role in DNA repair and acts as a mark that distinguishes between apoptotic and repair responses to genotoxic stress. Its function as histone phosphatase may contribute to its function in transcription regulation during organogenesis. Also has phosphatase activity with proteins phosphorylated on Ser and Thr residues (in vitro). Required for normal embryonic development of the skeleton, kidneys and ears. The sequence is that of Protein phosphatase EYA1 (EYA1) from Gallus gallus (Chicken).